The following is a 306-amino-acid chain: Protein-L-isoaspartate O-methyltransferase 2 (306 aa).

Positions 1 to 82 are disordered; sequence MSTTPPRNKF…ASAATAGGGG (82 aa). Over residues 38 to 48 the composition is skewed to pro residues; sequence PAAPTPAPAKP. A compositionally biased stretch (low complexity) spans 54-77; sequence PRTAAPAPAPVPASAVEQRASAAT. The active site involves serine 142.

Belongs to the methyltransferase superfamily. L-isoaspartyl/D-aspartyl protein methyltransferase family.

The protein localises to the cytoplasm. It catalyses the reaction [protein]-L-isoaspartate + S-adenosyl-L-methionine = [protein]-L-isoaspartate alpha-methyl ester + S-adenosyl-L-homocysteine. Functionally, catalyzes the methyl esterification of L-isoaspartyl residues in peptides and proteins that result from spontaneous decomposition of normal L-aspartyl and L-asparaginyl residues. It plays a role in the repair and/or degradation of damaged proteins. The polypeptide is Protein-L-isoaspartate O-methyltransferase 2 (Cupriavidus necator (strain ATCC 17699 / DSM 428 / KCTC 22496 / NCIMB 10442 / H16 / Stanier 337) (Ralstonia eutropha)).